Reading from the N-terminus, the 144-residue chain is Oxoglutarate dehydrogenase inhibitor (144 aa).

T14 is subject to Phosphothreonine. The region spanning 68–117 is the FHA domain; the sequence is TAAGRHPDSDIFLDDVTVSRRHAEFRRNGDQYEVVDVGSLNGTYVNREPK.

It is found in the cytoplasm. In terms of biological role, an essential component of the PknG signaling pathway. When unphosphorylated, it inhibits the activity of 2-oxoglutarate dehydrogenase. When phosphorylated it does not inhibit 2-oxoglutarate dehydrogenase. The sequence is that of Oxoglutarate dehydrogenase inhibitor (odhI) from Corynebacterium jeikeium (strain K411).